The chain runs to 405 residues: L-rhamnonate dehydratase (405 aa).

Residues H33 and R59 each coordinate substrate. Residues D226, E252, and E280 each coordinate Mg(2+). H329 functions as the Proton acceptor in the catalytic mechanism. E349 contacts substrate.

It belongs to the mandelate racemase/muconate lactonizing enzyme family. RhamD subfamily. In terms of assembly, homooctamer; tetramer of dimers. Requires Mg(2+) as cofactor.

The catalysed reaction is L-rhamnonate = 2-dehydro-3-deoxy-L-rhamnonate + H2O. Functionally, catalyzes the dehydration of L-rhamnonate to 2-keto-3-deoxy-L-rhamnonate (KDR). This is L-rhamnonate dehydratase from Shigella boydii serotype 4 (strain Sb227).